Reading from the N-terminus, the 79-residue chain is ATP synthase subunit c (79 aa).

Helical transmembrane passes span 11–31 (MAAAIMMGLAAIGAAIGIGIL) and 53–73 (FFIVMGLVDAIPMIAVGLGLY).

It belongs to the ATPase C chain family. As to quaternary structure, F-type ATPases have 2 components, F(1) - the catalytic core - and F(0) - the membrane proton channel. F(1) has five subunits: alpha(3), beta(3), gamma(1), delta(1), epsilon(1). F(0) has three main subunits: a(1), b(2) and c(10-14). The alpha and beta chains form an alternating ring which encloses part of the gamma chain. F(1) is attached to F(0) by a central stalk formed by the gamma and epsilon chains, while a peripheral stalk is formed by the delta and b chains.

The protein resides in the cell inner membrane. Its function is as follows. F(1)F(0) ATP synthase produces ATP from ADP in the presence of a proton or sodium gradient. F-type ATPases consist of two structural domains, F(1) containing the extramembraneous catalytic core and F(0) containing the membrane proton channel, linked together by a central stalk and a peripheral stalk. During catalysis, ATP synthesis in the catalytic domain of F(1) is coupled via a rotary mechanism of the central stalk subunits to proton translocation. Functionally, key component of the F(0) channel; it plays a direct role in translocation across the membrane. A homomeric c-ring of between 10-14 subunits forms the central stalk rotor element with the F(1) delta and epsilon subunits. In Yersinia enterocolitica serotype O:8 / biotype 1B (strain NCTC 13174 / 8081), this protein is ATP synthase subunit c.